Reading from the N-terminus, the 473-residue chain is Cell division protein FtsZ homolog 2-2, chloroplastic (473 aa).

GTP-binding positions include 124-128, 213-215, Glu-244, and Arg-248; these read GGGSN and GTG. Thr-282 bears the Phosphothreonine; by PGK1 mark. Asp-292 contributes to the GTP binding site. Residues 424–455 form a disordered region; sequence EEGEGRPLQATQADASMGATRRPSSSFTEGSS. Over residues 445 to 454 the composition is skewed to polar residues; the sequence is RPSSSFTEGS.

Belongs to the FtsZ family. As to quaternary structure, aggregates to form a contractile ring-like structure; contraction of the ring was accompanied by an increase in the filament turnover rate. Self-interacts and binds to FTSZ1 in heteropolymers to form two morphologically distinct types of filaments, termed type-I (smooth filaments) and -II (rough filaments), in a GTP-dependent manner. Part of a complex made of ARC3, ARC6, FTSZ1 and FTSZ2. Interacts (via C-terminus) with ARC6. Interacts with CDP1/PARC6. Binds to PGK1. Post-translationally, phosphorylation at Thr-282 is required for the formation of contractile ring at the chloroplast midpoint.

The protein localises to the plastid. Its subcellular location is the chloroplast stroma. It localises to the chloroplast thylakoid membrane. Exhibits GTPase activity. Component of the plastid division machinery that forms a contractile ring at the division site. Contributes to plastid division in the vegetative shoot apex, at the shoot apical meristem (SAM) where the proplastid-to-chloroplast transition takes place. The chain is Cell division protein FtsZ homolog 2-2, chloroplastic from Arabidopsis thaliana (Mouse-ear cress).